Consider the following 95-residue polypeptide: Small ribosomal subunit protein mS37 (95 aa).

The CHCH domain maps to 27 to 69 (ANKCLVLMSNLLQCWSSYGHMSPKCAGLVTELKSCTSESALGK). 2 short sequence motifs (cx9C motif) span residues 30–40 (CLVLMSNLLQC) and 51–61 (CAGLVTELKSC). Cystine bridges form between Cys-30/Cys-61 and Cys-40/Cys-51.

This sequence belongs to the mitochondrion-specific ribosomal protein mS37 family. In terms of assembly, component of the mitochondrial small ribosomal subunit (mt-SSU). Mature yeast 74S mitochondrial ribosomes consist of a small (37S) and a large (54S) subunit. The 37S small subunit contains a 15S ribosomal RNA (15S mt-rRNA) and 34 different proteins. The 54S large subunit contains a 21S rRNA (21S mt-rRNA) and 46 different proteins.

Its subcellular location is the mitochondrion. The protein localises to the mitochondrion matrix. In terms of biological role, component of the mitochondrial ribosome (mitoribosome), a dedicated translation machinery responsible for the synthesis of mitochondrial genome-encoded proteins, including at least some of the essential transmembrane subunits of the mitochondrial respiratory chain. The mitoribosomes are attached to the mitochondrial inner membrane and translation products are cotranslationally integrated into the membrane. The protein is Small ribosomal subunit protein mS37 (MRP10) of Saccharomyces cerevisiae (strain ATCC 204508 / S288c) (Baker's yeast).